Here is a 209-residue protein sequence, read N- to C-terminus: Regulator of G-protein signaling 1 (209 aa).

Residues 19-42 are disordered; sequence FSASPKDSKEHSHSLLDDKKQKKR. The span at 24–38 shows a compositional bias: basic and acidic residues; the sequence is KDSKEHSHSLLDDKK. The RGS domain maps to 85–200; sequence SLEKLLANQT…LKSNIYLNLL (116 aa).

Interacts with GNAI1 and GNAQ. In terms of tissue distribution, detected in spleen, lymph node and intestine.

It localises to the cell membrane. It is found in the cytoplasm. The protein localises to the cytosol. Its function is as follows. Regulates G protein-coupled receptor signaling cascades, including signaling downstream of the N-formylpeptide chemoattractant receptors and leukotriene receptors. Inhibits B cell chemotaxis toward CXCL12. Inhibits signal transduction by increasing the GTPase activity of G protein alpha subunits thereby driving them into their inactive GDP-bound form. The sequence is that of Regulator of G-protein signaling 1 (Rgs1) from Mus musculus (Mouse).